We begin with the raw amino-acid sequence, 129 residues long: Glycine cleavage system H protein (129 aa).

One can recognise a Lipoyl-binding domain in the interval 24–106; that stretch reads TYTVGITEHA…YAGGWIFKIK (83 aa). Lys-65 carries the post-translational modification N6-lipoyllysine.

The protein belongs to the GcvH family. In terms of assembly, the glycine cleavage system is composed of four proteins: P, T, L and H. The cofactor is (R)-lipoate.

Functionally, the glycine cleavage system catalyzes the degradation of glycine. The H protein shuttles the methylamine group of glycine from the P protein to the T protein. This is Glycine cleavage system H protein from Escherichia coli O45:K1 (strain S88 / ExPEC).